The chain runs to 349 residues: Phosphoribosylformylglycinamidine cyclo-ligase (349 aa).

It belongs to the AIR synthase family.

Its subcellular location is the cytoplasm. It carries out the reaction 2-formamido-N(1)-(5-O-phospho-beta-D-ribosyl)acetamidine + ATP = 5-amino-1-(5-phospho-beta-D-ribosyl)imidazole + ADP + phosphate + H(+). It participates in purine metabolism; IMP biosynthesis via de novo pathway; 5-amino-1-(5-phospho-D-ribosyl)imidazole from N(2)-formyl-N(1)-(5-phospho-D-ribosyl)glycinamide: step 2/2. The chain is Phosphoribosylformylglycinamidine cyclo-ligase from Bordetella parapertussis (strain 12822 / ATCC BAA-587 / NCTC 13253).